The primary structure comprises 371 residues: Leu/Ile/Val-binding protein homolog 2 (371 aa).

Positions 1–23 are cleaved as a signal peptide; sequence MKKSLFCGVCLCALVAMGGTSFA.

Belongs to the leucine-binding protein family.

In terms of biological role, component of an amino-acid transport system. The sequence is that of Leu/Ile/Val-binding protein homolog 2 from Brucella abortus (strain 2308).